The chain runs to 95 residues: Signal recognition particle 19 kDa protein (95 aa).

This sequence belongs to the SRP19 family. Part of the signal recognition particle protein translocation system, which is composed of SRP and FtsY. Archaeal SRP consists of a 7S RNA molecule of 300 nucleotides and two protein subunits: SRP54 and SRP19.

Its subcellular location is the cytoplasm. Involved in targeting and insertion of nascent membrane proteins into the cytoplasmic membrane. Binds directly to 7S RNA and mediates binding of the 54 kDa subunit of the SRP. The polypeptide is Signal recognition particle 19 kDa protein (Desulfurococcus amylolyticus (strain DSM 18924 / JCM 16383 / VKM B-2413 / 1221n) (Desulfurococcus kamchatkensis)).